The chain runs to 335 residues: Cathepsin B-like cysteine proteinase 4 (335 aa).

The N-terminal stretch at 1–15 (MKYLILAALVAVTAG) is a signal peptide. The propeptide occupies 16–80 (LVIPLVPKTQ…VVKHDINEDT (65 aa)). Disulfide bonds link cysteine 94/cysteine 123, cysteine 106/cysteine 150, cysteine 142/cysteine 209, cysteine 143/cysteine 146, cysteine 179/cysteine 213, and cysteine 187/cysteine 199. The active site involves cysteine 109. Residue asparagine 193 is glycosylated (N-linked (GlcNAc...) asparagine). Residues histidine 281 and asparagine 301 contribute to the active site.

Belongs to the peptidase C1 family.

It localises to the secreted. Its function is as follows. Thiol protease which shows activity against the fluorogenic substrate z-Arg-Arg-AMC. This Caenorhabditis elegans protein is Cathepsin B-like cysteine proteinase 4 (cpr-4).